The chain runs to 452 residues: Caspase-2 (452 aa).

A2 carries the N-acetylalanine modification. Positions A2–D169 are excised as a propeptide. The CARD domain maps to M32–T121. S157 carries the phosphoserine modification. Residues H277 and C320 contribute to the active site. The propeptide occupies D326–D333. The segment covering R327–N336 has biased composition (basic and acidic residues). Residues R327–G349 are disordered. S340 carries the phosphoserine modification.

This sequence belongs to the peptidase C14A family. In terms of assembly, heterotetramer that consists of two anti-parallel arranged heterodimers, each one formed by a p18 subunit and a p12 subunit. Forms a complex named the PIDDosome with PIDD1 and CRADD. Interacts with NOL3 (via CARD domain); inhibits CASP2 activity in a phosphorylation-dependent manner. The mature protease can process its own propeptide, but not that of other caspases.

The enzyme catalyses Strict requirement for an Asp residue at P1, with 316-Asp being essential for proteolytic activity and has a preferred cleavage sequence of Val-Asp-Val-Ala-Asp-|-.. In terms of biological role, involved in the activation cascade of caspases responsible for apoptosis execution. Might function by either activating some proteins required for cell death or inactivating proteins necessary for cell survival. Associates with PIDD1 and CRADD to form the PIDDosome, a complex that activates CASP2 and triggers apoptosis in response to genotoxic stress. This is Caspase-2 (Casp2) from Rattus norvegicus (Rat).